Reading from the N-terminus, the 569-residue chain is Urease subunit alpha (569 aa).

Ni(2+) contacts are provided by histidine 136, histidine 138, and lysine 219. Lysine 219 carries the N6-carboxylysine modification. Histidine 221 serves as a coordination point for substrate. Histidine 248 and histidine 274 together coordinate Ni(2+). Residue histidine 322 is the Proton donor of the active site. Aspartate 362 contacts Ni(2+).

Belongs to the metallo-dependent hydrolases superfamily. Urease alpha subunit family. In terms of assembly, heterotrimer of UreA (gamma), UreB (beta) and UreC (alpha) subunits. Three heterotrimers associate to form the active enzyme. Ni cation serves as cofactor. Post-translationally, carboxylation allows a single lysine to coordinate two nickel ions.

The protein localises to the cytoplasm. The catalysed reaction is urea + 2 H2O + H(+) = hydrogencarbonate + 2 NH4(+). The protein operates within nitrogen metabolism; urea degradation; CO(2) and NH(3) from urea (urease route): step 1/1. The polypeptide is Urease subunit alpha (Microcystis aeruginosa (strain NIES-843 / IAM M-2473)).